The sequence spans 1179 residues: Probable manganese-transporting ATPase PDR2 (1179 aa).

The Cytoplasmic segment spans residues 1–20 (MSSFRVGGKVVEKVDLCRKK). The helical transmembrane segment at 21 to 42 (QLVWRLDVWPFAILYTVWLTTI) threads the bilayer. Topologically, residues 43 to 50 (VPSIDFSD) are lumenal. The helical transmembrane segment at 51-71 (ACIALGGLSAFHILVLLFTTW) threads the bilayer. Residues 72–192 (SVDFKCFVQF…FDYPQPTFQK (121 aa)) are Cytoplasmic-facing. A helical membrane pass occupies residues 193-215 (LMKENCMEPFFVFQVFCVGLWCL). The Lumenal portion of the chain corresponds to 216 to 218 (DEF). A helical transmembrane segment spans residues 219–238 (WYYSVFTLFMLFMFESTMAK). The Cytoplasmic segment spans residues 239-402 (SRLKTLTDLR…ERVTANSWES (164 aa)). Residues 403 to 422 (GLFILFLVVFAVIAAGYVLV) form a helical membrane-spanning segment. The Lumenal segment spans residues 423–435 (KGLEDPTRSKYKL). A helical transmembrane segment spans residues 436–453 (LLGCSLIITSVIPPELPM). Residues 454–947 (ELSIAVNTSL…RQGRSTLVTT (494 aa)) lie on the Cytoplasmic side of the membrane. Catalysis depends on aspartate 491, which acts as the 4-aspartylphosphate intermediate. Residues aspartate 812 and aspartate 816 each coordinate Mg(2+). The disordered stretch occupies residues 833–880 (KLPLSPSDSSKDDKSKSKKSKLPLEPASKTITQNGEGSSKGKIPPQNR). Residues 948–967 (LQMFKILGLNCLATAYVLSV) form a helical membrane-spanning segment. The Lumenal portion of the chain corresponds to 968-979 (MYLDGVKLGDVQ). Residues 980–997 (ATISGVLTAAFFLFISHA) form a helical membrane-spanning segment. The Cytoplasmic portion of the chain corresponds to 998–1013 (RPLQTLSAERPHPSVF). A helical transmembrane segment spans residues 1014-1034 (SVYLFLSLIGQFAVHLTFLVY). The Lumenal portion of the chain corresponds to 1035–1059 (SVKEAEKHMPEECIEPDASFHPNLV). The chain crosses the membrane as a helical span at residues 1060–1079 (NTVSYMVSMMLQVATFAVNY). The Cytoplasmic portion of the chain corresponds to 1080 to 1092 (MGHPFNQSIRENK). A helical membrane pass occupies residues 1093–1110 (PFFYALIAGAGFFTVIAS). Residues 1111-1128 (DLFRDLNDSLKLVPLPQG) lie on the Lumenal side of the membrane. A helical transmembrane segment spans residues 1129-1148 (LRDKLLIWASLMFIICYSWE). The Cytoplasmic segment spans residues 1149–1179 (RLLRWAFPGKISSWKHKQRAVTANLEKKKKV).

This sequence belongs to the cation transport ATPase (P-type) (TC 3.A.3) family. Type V subfamily. As to expression, highly expressed in root meristem. Expressed in pavement cells of trichomes, stipules, stamens and pollen grains.

It is found in the endoplasmic reticulum membrane. It catalyses the reaction ATP + H2O = ADP + phosphate + H(+). In terms of biological role, mediates manganese transport into the endoplasmic reticulum. The ATPase activity is required for cellular manganese homeostasis. Plays an important role in pollen and root development through its impact on protein secretion and transport processes. Functions together with LPR1 and LPR2 in a common pathway that adjusts root meristem activity to phosphate availability. Under phosphate limitation, restricts SHR movement in root meristem and is required for maintaining SCR expression in the root meristem stem-cell niche as well as for proximal meristem activity. Can complement the yeast spf1 mutant. In Arabidopsis thaliana (Mouse-ear cress), this protein is Probable manganese-transporting ATPase PDR2 (PDR2).